A 348-amino-acid chain; its full sequence is Caricain (348 aa).

Residues 1–16 (MAMIPSISKLLFVAIC) form the signal peptide. A propeptide spans 17–132 (LFVHMSVSFG…EEFINEDTVN (116 aa)) (activation peptide). N-linked (GlcNAc...) asparagine glycosylation is present at Asn-86. 3 cysteine pairs are disulfide-bonded: Cys-154-Cys-195, Cys-188-Cys-227, and Cys-285-Cys-336. Residue Cys-157 is part of the active site. An E64-binding site is contributed by Cys-157. Residues His-291 and Asn-311 contribute to the active site.

Belongs to the peptidase C1 family. As to quaternary structure, monomer.

The catalysed reaction is Hydrolysis of proteins with broad specificity for peptide bonds, similar to those of papain and chymopapain.. With respect to regulation, repressed by the active-site-directed cysteine protease inhibitor E64 (L-trans-epoxysuccinyl-leucylamide-(4-guanido)-butane) produced by Aspergillus japonicus. Functionally, cysteine proteinase with a high level of diversity in substrate specificity. The chain is Caricain from Carica papaya (Papaya).